The following is a 396-amino-acid chain: Putative arsenical pump-driving ATPase 1 (396 aa).

8–15 contributes to the ATP binding site; the sequence is GKGGVGKT.

This sequence belongs to the arsA ATPase family.

The enzyme catalyses arsenite(in) + ATP + H2O = arsenite(out) + ADP + phosphate + H(+). Functionally, anion-transporting ATPase. Catalyzes the extrusion of arsenite. In Aquifex aeolicus (strain VF5), this protein is Putative arsenical pump-driving ATPase 1 (arsA1).